The following is a 100-amino-acid chain: Cell division topological specificity factor (100 aa).

The protein belongs to the MinE family.

Its function is as follows. Prevents the cell division inhibition by proteins MinC and MinD at internal division sites while permitting inhibition at polar sites. This ensures cell division at the proper site by restricting the formation of a division septum at the midpoint of the long axis of the cell. In Blochmanniella floridana, this protein is Cell division topological specificity factor.